A 515-amino-acid chain; its full sequence is Maturase K (515 aa).

This sequence belongs to the intron maturase 2 family. MatK subfamily.

The protein localises to the plastid. It localises to the chloroplast. In terms of biological role, usually encoded in the trnK tRNA gene intron. Probably assists in splicing its own and other chloroplast group II introns. This is Maturase K from Larix laricina (Tamarack).